A 935-amino-acid chain; its full sequence is MKGLTCFLLCFLLSEAQGFEIPTNGLSEFAEYGDLAELALGKFHVVPGNRRSQEGVDQVTLYSYKVQSTITSRMANTVIQTKVVNHSPEPQDVVFDIQIPKGAFISNFSMTVDGTKFTSSIKEKTVGRALYWQARAKGKTAGLVRSRALDMENFKTEVNIAPGAKVQFELHYQEVKWRNLGSYEHRIHLQPGRLAKHLEVDVQIIEPQGLRFLHVLDTFDGHFDGVPVVVKGQQKAHVAFKPTVAQQRKCPSCSETAVDGELVVMYDVNREQKAGELQLFNGYFVHFFAPESMDPIPKNILFVIDVSGSMWGIKMKQTVEAMKTILDDLRAEDQFSLVDFNHNIRTWRNDLVSATKTQVADAKTYIEKIQPSGGTNINEALLRAIFILNEANNLGLLDPNSVSLIILVSDGDPTVGELQLSKIQKNVKQNIQDNVSLFSLGIGFDVDYDFLKRLSNDNRGMAQRIYGNQDTASQLKKFYNQVSTPLLRNVQFNYPQASVTDVTQNSFPNYFGGSEIVVAGKFNPEKLEQLQGIITATSANVELVLETLAEMDGLEAFLAKDRHADPDFTKKLWAYLTINQLLDERSRAPSAAVKKKITKSILQMSLDHHIVTPLTAMVVENEAGDERMLADAPPQDQSCCSGTLNYGRKVTPNSLPSWVNPLPTPRVPLPAVGPSVIEATPPPHVMRVENDPHFIIYLPRSQQNICFNIDSEPGKILNLVSDPESGIVINGQLISAKKLKDGKLSTYFGKIGFYFQHEDVKVEISTETISLSRGSRVSVLSWSDSALVLNQRVHISVKKEKTVTVTLDQEVSFSVLLHRVWKKHPINVDFLGIYIPPTTKFSPKAHGLIGQFMHEPEIRIFNERPGKDPEKPEASMEVKGQTLVVTRGLQKDYRTDRVFGTDVPCWFVHNSGKGFIDGHYKDYLVPLLYSFLKRP.

An N-terminal signal peptide occupies residues 1 to 18; sequence MKGLTCFLLCFLLSEAQG. The propeptide occupies 19–53; the sequence is FEIPTNGLSEFAEYGDLAELALGKFHVVPGNRRSQ. The 130-residue stretch at 45–174 folds into the VIT domain; the sequence is VVPGNRRSQE…KVQFELHYQE (130 aa). Asn107 carries an N-linked (GlcNAc...) asparagine glycan. Glu271 is subject to 4-carboxyglutamate. The VWFA domain occupies 297 to 457; that stretch reads PKNILFVIDV…YDFLKRLSND (161 aa). A glycan (N-linked (GlcNAc...) asparagine) is linked at Asn434. Ser455 carries the phosphoserine modification. An Aspartate 1-(chondroitin 4-sulfate)-ester modification is found at Asp691. The propeptide occupies 692-935; that stretch reads PHFIIYLPRS…PLLYSFLKRP (244 aa). Ser875 carries the post-translational modification Phosphoserine.

This sequence belongs to the ITIH family. I-alpha-I plasma protease inhibitors are assembled from one or two heavy chains (HC) and one light chain, bikunin. Inter-alpha-inhibitor (I-alpha-I) is composed of ITIH1/HC1, ITIH2/HC2 and bikunin. Post-translationally, heavy chains are linked to bikunin via chondroitin 4-sulfate esterified to the alpha-carboxyl of the C-terminal aspartate after propeptide cleavage. In terms of processing, phosphorylated by FAM20C in the extracellular medium.

Its subcellular location is the secreted. Functionally, may act as a carrier of hyaluronan in serum or as a binding protein between hyaluronan and other matrix protein, including those on cell surfaces in tissues to regulate the localization, synthesis and degradation of hyaluronan which are essential to cells undergoing biological processes. The protein is Inter-alpha-trypsin inhibitor heavy chain H2 (ITIH2) of Sus scrofa (Pig).